The following is a 168-amino-acid chain: G/U mismatch-specific DNA glycosylase (168 aa).

This sequence belongs to the uracil-DNA glycosylase (UDG) superfamily. TDG/mug family. In terms of assembly, binds DNA as a monomer.

It localises to the cytoplasm. The catalysed reaction is Specifically hydrolyzes mismatched double-stranded DNA and polynucleotides, releasing free uracil.. Its function is as follows. Excises ethenocytosine and uracil, which can arise by alkylation or deamination of cytosine, respectively, from the corresponding mispairs with guanine in ds-DNA. It is capable of hydrolyzing the carbon-nitrogen bond between the sugar-phosphate backbone of the DNA and the mispaired base. The complementary strand guanine functions in substrate recognition. Required for DNA damage lesion repair in stationary-phase cells. The sequence is that of G/U mismatch-specific DNA glycosylase from Salmonella paratyphi B (strain ATCC BAA-1250 / SPB7).